The primary structure comprises 777 residues: Phosphoribosylformylglycinamidine synthase subunit PurL (777 aa).

The active site involves H50. Residues Y53 and K92 each coordinate ATP. E94 is a binding site for Mg(2+). Residues 95–98 (SHNH) and R117 contribute to the substrate site. H96 (proton acceptor) is an active-site residue. Residue D118 coordinates Mg(2+). Q241 is a substrate binding site. D269 serves as a coordination point for Mg(2+). 313–315 (ESQ) contributes to the substrate binding site. Positions 516 and 553 each coordinate ATP. N554 is a binding site for Mg(2+). S556 is a substrate binding site.

It belongs to the FGAMS family. In terms of assembly, monomer. Part of the FGAM synthase complex composed of 1 PurL, 1 PurQ and 2 PurS subunits.

It localises to the cytoplasm. It carries out the reaction N(2)-formyl-N(1)-(5-phospho-beta-D-ribosyl)glycinamide + L-glutamine + ATP + H2O = 2-formamido-N(1)-(5-O-phospho-beta-D-ribosyl)acetamidine + L-glutamate + ADP + phosphate + H(+). It participates in purine metabolism; IMP biosynthesis via de novo pathway; 5-amino-1-(5-phospho-D-ribosyl)imidazole from N(2)-formyl-N(1)-(5-phospho-D-ribosyl)glycinamide: step 1/2. Part of the phosphoribosylformylglycinamidine synthase complex involved in the purines biosynthetic pathway. Catalyzes the ATP-dependent conversion of formylglycinamide ribonucleotide (FGAR) and glutamine to yield formylglycinamidine ribonucleotide (FGAM) and glutamate. The FGAM synthase complex is composed of three subunits. PurQ produces an ammonia molecule by converting glutamine to glutamate. PurL transfers the ammonia molecule to FGAR to form FGAM in an ATP-dependent manner. PurS interacts with PurQ and PurL and is thought to assist in the transfer of the ammonia molecule from PurQ to PurL. The sequence is that of Phosphoribosylformylglycinamidine synthase subunit PurL from Synechococcus elongatus (strain ATCC 33912 / PCC 7942 / FACHB-805) (Anacystis nidulans R2).